A 146-amino-acid polypeptide reads, in one-letter code: General odorant-binding protein 19a (146 aa).

Positions 1 to 22 are cleaved as a signal peptide; it reads MKFHLLLVCVAISLGPIPQSEA. 3 disulfides stabilise this stretch: cysteine 40–cysteine 72, cysteine 68–cysteine 126, and cysteine 113–cysteine 135.

This sequence belongs to the PBP/GOBP family. Expressed in adult olfactory system. Expressed exclusively in a subset of chemosensory sensilla on the third antennal segment.

The protein resides in the secreted. In terms of biological role, present in the aqueous fluid surrounding olfactory sensory dendrites and are thought to aid in the capture and transport of hydrophobic odorants into and through this fluid. The polypeptide is General odorant-binding protein 19a (Obp19a) (Drosophila melanogaster (Fruit fly)).